A 102-amino-acid polypeptide reads, in one-letter code: uncharacterized protein (102 aa).

This is an uncharacterized protein from Methanocaldococcus jannaschii (strain ATCC 43067 / DSM 2661 / JAL-1 / JCM 10045 / NBRC 100440) (Methanococcus jannaschii).